We begin with the raw amino-acid sequence, 686 residues long: Cadmium, zinc and cobalt-transporting ATPase (686 aa).

One can recognise an HMA domain in the interval 1–62 (MQEYHIHNLD…FIKQNEPHLS (62 aa)). Topologically, residues 1 to 72 (MQEYHIHNLD…LSFKEATEKP (72 aa)) are cytoplasmic. C11 and C14 together coordinate Cd(2+). Residues C11 and C14 each contribute to the Co(2+) site. C11 and C14 together coordinate Zn(2+). The chain crosses the membrane as a helical span at residues 73–92 (LSFTPLIITIMVFLGAILIL). The Extracellular portion of the chain corresponds to 93–102 (HLNPSPLIEK). Residues 103-124 (AMFFVLALVYLVSGKDVILGAF) traverse the membrane as a helical segment. Over 125-131 (RGLRKGQ) the chain is Cytoplasmic. A helical membrane pass occupies residues 132–151 (FFDENALMLIATIAAFFVGA). The Extracellular segment spans residues 152-154 (YEE). Residues 155–174 (SVSIMVFYSAGEFLQKLAVS) form a helical membrane-spanning segment. The Cytoplasmic segment spans residues 175–308 (RSKKSLKALV…ITKFSRYYTP (134 aa)). A helical transmembrane segment spans residues 309–327 (SVLFIALMIAVLPPLFSMG). Over 328–332 (SFDEW) the chain is Extracellular. A helical transmembrane segment spans residues 333–350 (IYRGLVALMVSCPCALVI). Residues 351 to 635 (SVPLGYFGGV…VLAIAKKTKS (285 aa)) are Cytoplasmic-facing. The active-site 4-aspartylphosphate intermediate is D388. Mg(2+) is bound by residues D583 and D587. Residues 636–657 (IIWQNILFALGIKAVFIVLGLM) form a helical membrane-spanning segment. Topologically, residues 658-665 (GVASLWEA) are extracellular. A helical membrane pass occupies residues 666–681 (VFGDVGVTLLALANSM). The Cytoplasmic segment spans residues 682-686 (RAMRA).

It belongs to the cation transport ATPase (P-type) (TC 3.A.3) family. Type IB subfamily.

It localises to the cell membrane. It catalyses the reaction Zn(2+)(in) + ATP + H2O = Zn(2+)(out) + ADP + phosphate + H(+). The enzyme catalyses Cd(2+)(in) + ATP + H2O = Cd(2+)(out) + ADP + phosphate + H(+). Couples the hydrolysis of ATP with the transport of cadmium, zinc and cobalt out of the cell. This ion efflux may influence the activity of urease, which is essential for the survival of the bacterium in the gastric environment. The protein is Cadmium, zinc and cobalt-transporting ATPase (cadA) of Helicobacter pylori (strain ATCC 700392 / 26695) (Campylobacter pylori).